The sequence spans 300 residues: 1D-myo-inositol 2-acetamido-2-deoxy-alpha-D-glucopyranoside deacetylase (300 aa).

Positions 13, 16, and 147 each coordinate Zn(2+).

It belongs to the MshB deacetylase family. Zn(2+) serves as cofactor.

It catalyses the reaction 1D-myo-inositol 2-acetamido-2-deoxy-alpha-D-glucopyranoside + H2O = 1D-myo-inositol 2-amino-2-deoxy-alpha-D-glucopyranoside + acetate. Catalyzes the deacetylation of 1D-myo-inositol 2-acetamido-2-deoxy-alpha-D-glucopyranoside (GlcNAc-Ins) in the mycothiol biosynthesis pathway. The sequence is that of 1D-myo-inositol 2-acetamido-2-deoxy-alpha-D-glucopyranoside deacetylase from Mycolicibacterium paratuberculosis (strain ATCC BAA-968 / K-10) (Mycobacterium paratuberculosis).